A 238-amino-acid polypeptide reads, in one-letter code: E3 ubiquitin-protein ligase ZNRF2 (238 aa).

Residues 1–137 (MGAKQSGPAA…AGGGPGGPRL (137 aa)) are disordered. G2 is lipidated: N-myristoyl glycine. Phosphoserine occurs at positions 20, 24, 75, 82, 107, 110, 141, 147, and 189. The span at 35–77 (GARAARFAAPVSGAQQPSASAGAAAAAAAAASAPAAPRSRSLG) shows a compositional bias: low complexity. An RING-type; atypical zinc finger spans residues 195 to 236 (CAICLEELQQGDTIARLPCLCIYHKGCIDEWFEVNRSCPEHP).

In terms of assembly, interacts with UBE2N. Interacts with ZNRF1. Interacts (when phosphorylated) with YWHAE. Post-translationally, phosphorylated; leading to binding to YWHAE. Phosphorylated by MTOR at Ser-147 and dephosphorylated by PP6C. Ser-147 phosphorylation stimulates vesicle-to-cytosol translocation. In terms of tissue distribution, expressed primarily in the nervous system. Expression is more intense in the granular cell layer of hippocampus, Purkinje cell layer of the cerebellum and the granular cell layer of the olfactory bulb. Detected in sensory neurons but not expressed in sympatic or enteric neurons. Expressed in testis, adipose tissue, columnar epithelial cells of the gut.

The protein localises to the endosome membrane. The protein resides in the lysosome membrane. It is found in the presynaptic cell membrane. Its subcellular location is the cytoplasm. It catalyses the reaction S-ubiquitinyl-[E2 ubiquitin-conjugating enzyme]-L-cysteine + [acceptor protein]-L-lysine = [E2 ubiquitin-conjugating enzyme]-L-cysteine + N(6)-ubiquitinyl-[acceptor protein]-L-lysine.. It participates in protein modification; protein ubiquitination. Its function is as follows. E3 ubiquitin-protein ligase that plays a role in the establishment and maintenance of neuronal transmission and plasticity. Ubiquitinates the Na(+)/K(+) ATPase alpha-1 subunit/ATP1A1 and thereby influences its endocytosis and/or degradation. Also acts as a positive regulator of mTORC1 activation by amino acids, which functions upstream of the V-ATPase and of Rag-GTPases. In turn, phosphorylation by mTOR leads to its inhibition via targeting to the cytosol allowing a self-regulating feedback mechanism. This chain is E3 ubiquitin-protein ligase ZNRF2 (Znrf2), found in Mus musculus (Mouse).